The sequence spans 466 residues: Heat stress transcription factor A-5 (466 aa).

The DNA-binding element occupies 21–115; that stretch reads PAPFLVKTYE…LLKNIHRRKP (95 aa). Positions 125–191 are hydrophobic repeat HR-A/B; that stretch reads SSTDQERAVL…KLLNFLETAI (67 aa). The Bipartite nuclear localization signal signature appears at 198–217; that stretch reads KNFGKKVEQLDISAYNKKRR. Disordered stretches follow at residues 215-248, 272-300, and 422-466; these read KRRL…GNIF, HSIQ…LTKR, and TERP…QLTL. Positions 218–233 are enriched in basic and acidic residues; it reads LPEVEQSKPPSEDSHL. Residues 414–423 carry the AHA motif; it reads DVFWEQFLTE. Composition is skewed to polar residues over residues 425–438 and 455–466; these read PGSS…STYR and LRNTKNIEQLTL. A Nuclear export signal motif is present at residues 461 to 466; the sequence is IEQLTL.

This sequence belongs to the HSF family. Class A subfamily. Homotrimer. Post-translationally, exhibits temperature-dependent phosphorylation.

Its subcellular location is the cytoplasm. It is found in the nucleus. Its function is as follows. Transcriptional activator that specifically binds DNA sequence 5'-AGAAnnTTCT-3' known as heat shock promoter elements (HSE). This is Heat stress transcription factor A-5 (HSFA5) from Arabidopsis thaliana (Mouse-ear cress).